A 267-amino-acid chain; its full sequence is Hydroxyethylthiazole kinase 2 (267 aa).

Met41 provides a ligand contact to substrate. Residues Lys116 and Thr166 each coordinate ATP. Residue Gly193 participates in substrate binding.

This sequence belongs to the Thz kinase family. Mg(2+) is required as a cofactor.

It carries out the reaction 5-(2-hydroxyethyl)-4-methylthiazole + ATP = 4-methyl-5-(2-phosphooxyethyl)-thiazole + ADP + H(+). The protein operates within cofactor biosynthesis; thiamine diphosphate biosynthesis; 4-methyl-5-(2-phosphoethyl)-thiazole from 5-(2-hydroxyethyl)-4-methylthiazole: step 1/1. Its function is as follows. Catalyzes the phosphorylation of the hydroxyl group of 4-methyl-5-beta-hydroxyethylthiazole (THZ). This is Hydroxyethylthiazole kinase 2 from Streptococcus pneumoniae (strain Taiwan19F-14).